Here is a 405-residue protein sequence, read N- to C-terminus: 4-hydroxy-3-methylbut-2-en-1-yl diphosphate synthase (flavodoxin) (405 aa).

4 residues coordinate [4Fe-4S] cluster: Cys297, Cys300, Cys343, and Glu350.

This sequence belongs to the IspG family. [4Fe-4S] cluster serves as cofactor.

The enzyme catalyses (2E)-4-hydroxy-3-methylbut-2-enyl diphosphate + oxidized [flavodoxin] + H2O + 2 H(+) = 2-C-methyl-D-erythritol 2,4-cyclic diphosphate + reduced [flavodoxin]. It functions in the pathway isoprenoid biosynthesis; isopentenyl diphosphate biosynthesis via DXP pathway; isopentenyl diphosphate from 1-deoxy-D-xylulose 5-phosphate: step 5/6. Converts 2C-methyl-D-erythritol 2,4-cyclodiphosphate (ME-2,4cPP) into 1-hydroxy-2-methyl-2-(E)-butenyl 4-diphosphate. In Francisella tularensis subsp. tularensis (strain FSC 198), this protein is 4-hydroxy-3-methylbut-2-en-1-yl diphosphate synthase (flavodoxin).